The chain runs to 421 residues: ATP-dependent RNA helicase RhlB (421 aa).

Positions 9-37 match the Q motif motif; sequence QKFSDFALHPQVVEALEKKGFYNCTPIQA. One can recognise a Helicase ATP-binding domain in the interval 40–219; that stretch reads LPLTLAGRDV…FEQMNNAEYV (180 aa). Position 53–60 (53–60) interacts with ATP; it reads AQTGTGKT. The DEAD box signature appears at 165 to 168; it reads DEAD. Residues 245 to 390 form the Helicase C-terminal domain; the sequence is RLLQTLIEEE…VSKYNPEALM (146 aa). Positions 396-421 are disordered; it reads PLRLTRSRPGNGPRRAGAPRNRRRSG. Residues 402 to 414 show a composition bias toward low complexity; that stretch reads SRPGNGPRRAGAP.

It belongs to the DEAD box helicase family. RhlB subfamily. As to quaternary structure, component of the RNA degradosome, which is a multiprotein complex involved in RNA processing and mRNA degradation.

The protein localises to the cytoplasm. It carries out the reaction ATP + H2O = ADP + phosphate + H(+). DEAD-box RNA helicase involved in RNA degradation. Has RNA-dependent ATPase activity and unwinds double-stranded RNA. In Salmonella arizonae (strain ATCC BAA-731 / CDC346-86 / RSK2980), this protein is ATP-dependent RNA helicase RhlB.